A 473-amino-acid chain; its full sequence is Arginine biosynthesis bifunctional protein ArgJ, mitochondrial (473 aa).

The substrate site is built by T201, K230, T241, E328, N468, and T473. T241 serves as the catalytic Nucleophile.

Belongs to the ArgJ family. Heterodimer of an alpha and a beta chain. The alpha and beta chains are autoproteolytically processed from a single precursor protein within the mitochondrion.

Its subcellular location is the mitochondrion matrix. The catalysed reaction is N(2)-acetyl-L-ornithine + L-glutamate = N-acetyl-L-glutamate + L-ornithine. It catalyses the reaction L-glutamate + acetyl-CoA = N-acetyl-L-glutamate + CoA + H(+). It participates in amino-acid biosynthesis; L-arginine biosynthesis; L-ornithine and N-acetyl-L-glutamate from L-glutamate and N(2)-acetyl-L-ornithine (cyclic): step 1/1. Its pathway is amino-acid biosynthesis; L-arginine biosynthesis; N(2)-acetyl-L-ornithine from L-glutamate: step 1/4. Its function is as follows. Catalyzes two activities which are involved in the cyclic version of arginine biosynthesis: the synthesis of acetylglutamate from glutamate and acetyl-CoA, and of ornithine by transacetylation between acetylornithine and glutamate. The polypeptide is Arginine biosynthesis bifunctional protein ArgJ, mitochondrial (Ajellomyces capsulatus (strain G186AR / H82 / ATCC MYA-2454 / RMSCC 2432) (Darling's disease fungus)).